The sequence spans 362 residues: Large ribosomal subunit protein uL2m (362 aa).

The N-terminal 23 residues, 1–23, are a transit peptide targeting the mitochondrion; it reads MLSYNRFRGYLIPQIHALKLFRY. A disordered region spans residues 306–362; sequence AMNPCDHPHGGGGGKSIGNKPSQSPWGVLAKGGYKTRRGKNVNKLLVRDRPRGKEKR. Over residues 351–362 the composition is skewed to basic and acidic residues; it reads LVRDRPRGKEKR.

The protein belongs to the universal ribosomal protein uL2 family. As to quaternary structure, component of the mitochondrial large ribosomal subunit (mt-LSU). Mature yeast 74S mitochondrial ribosomes consist of a small (37S) and a large (54S) subunit. The 37S small subunit contains a 15S ribosomal RNA (15S mt-rRNA) and at least 32 different proteins. The 54S large subunit contains a 21S rRNA (21S mt-rRNA) and at least 45 different proteins. uL2m has a Na/K ligand binding site.

Its subcellular location is the mitochondrion. Component of the mitochondrial ribosome (mitoribosome), a dedicated translation machinery responsible for the synthesis of mitochondrial genome-encoded proteins, including at least some of the essential transmembrane subunits of the mitochondrial respiratory chain. The mitoribosomes are attached to the mitochondrial inner membrane and translation products are cotranslationally integrated into the membrane. The polypeptide is Large ribosomal subunit protein uL2m (rml2) (Schizosaccharomyces pombe (strain 972 / ATCC 24843) (Fission yeast)).